The sequence spans 280 residues: Undecaprenyl-diphosphatase (280 aa).

Helical transmembrane passes span 1-21 (MEWIQAAILGIVQGLTEFLPI), 40-60 (GAAFTAVSQLGTEAAVIVFFW), 89-109 (WLVVAGSIPIIVVGLFFQNAI), 116-136 (LWIVATTLIVFGVILAVADAV), 146-166 (LTVKHGILYGLAQCLALIPGV), 191-211 (FLLAIPAVLGSGFYELFKIVA), 227-247 (LATVIAFVVGYLIIGWFLKFI), and 260-280 (IALGLVVFVLLGFGVIPATLS).

It belongs to the UppP family.

Its subcellular location is the cell membrane. It carries out the reaction di-trans,octa-cis-undecaprenyl diphosphate + H2O = di-trans,octa-cis-undecaprenyl phosphate + phosphate + H(+). Catalyzes the dephosphorylation of undecaprenyl diphosphate (UPP). Confers resistance to bacitracin. The polypeptide is Undecaprenyl-diphosphatase (Renibacterium salmoninarum (strain ATCC 33209 / DSM 20767 / JCM 11484 / NBRC 15589 / NCIMB 2235)).